Reading from the N-terminus, the 269-residue chain is Small ribosomal subunit protein uS2 (269 aa).

The segment at 235–269 is disordered; that stretch reads FDAKNPLKPQNYNTLNKRPYQDSPRKPSYQNQNQR.

This sequence belongs to the universal ribosomal protein uS2 family.

The chain is Small ribosomal subunit protein uS2 from Aster yellows witches'-broom phytoplasma (strain AYWB).